The chain runs to 433 residues: Methylenetetrahydrofolate--tRNA-(uracil-5-)-methyltransferase TrmFO (433 aa).

8-13 (GAGLAG) contacts FAD.

Belongs to the MnmG family. TrmFO subfamily. It depends on FAD as a cofactor.

Its subcellular location is the cytoplasm. The enzyme catalyses uridine(54) in tRNA + (6R)-5,10-methylene-5,6,7,8-tetrahydrofolate + NADH + H(+) = 5-methyluridine(54) in tRNA + (6S)-5,6,7,8-tetrahydrofolate + NAD(+). The catalysed reaction is uridine(54) in tRNA + (6R)-5,10-methylene-5,6,7,8-tetrahydrofolate + NADPH + H(+) = 5-methyluridine(54) in tRNA + (6S)-5,6,7,8-tetrahydrofolate + NADP(+). Catalyzes the folate-dependent formation of 5-methyl-uridine at position 54 (M-5-U54) in all tRNAs. This Carboxydothermus hydrogenoformans (strain ATCC BAA-161 / DSM 6008 / Z-2901) protein is Methylenetetrahydrofolate--tRNA-(uracil-5-)-methyltransferase TrmFO.